Reading from the N-terminus, the 303-residue chain is MMSIDITTNHKIIFGDARKMDEIEDESVHLVVTSPPYPMIEMWDELFKMLNLEINKRWMEMENEEDEEKKEKLIMQIYNLMHQTLYPVWEEVYRVLVPGGIACINIGDATRKINGVFRLFPNHSKIIENFEKIGFVTLPYILWKKPSNKPNAFLGSGFLPPNAYVTLDVEYILIFRKGKPRKFKPKDPLRYASAYTKEERDRWFSQIWEIVGDKQTHPKIERRTASFPEEIPRRLIRMFSIIGDTVLDPFLGTGTTVKAAIELKRNSIGYEIDKSLKPIIEEKIGIKQKRIGMDFNVEFINRG.

The protein belongs to the N(4)/N(6)-methyltransferase family. N(4) subfamily.

The enzyme catalyses a 2'-deoxycytidine in DNA + S-adenosyl-L-methionine = an N(4)-methyl-2'-deoxycytidine in DNA + S-adenosyl-L-homocysteine + H(+). In terms of biological role, a beta subtype methylase that recognizes the double-stranded sequence 5'-CTAG-3', methylates C-1 on both strands, and protects the DNA from cleavage by the MjaI endonuclease. This chain is Type II methyltransferase M.MjaI (mjaIM), found in Methanocaldococcus jannaschii (strain ATCC 43067 / DSM 2661 / JAL-1 / JCM 10045 / NBRC 100440) (Methanococcus jannaschii).